Consider the following 262-residue polypeptide: Purine nucleoside phosphorylase SSP1584 (262 aa).

H79, C124, and H141 together coordinate Zn(2+).

Belongs to the purine nucleoside phosphorylase YfiH/LACC1 family. As to quaternary structure, homodimer. Requires Cu(2+) as cofactor. It depends on Zn(2+) as a cofactor.

It catalyses the reaction adenosine + phosphate = alpha-D-ribose 1-phosphate + adenine. The catalysed reaction is S-methyl-5'-thioadenosine + phosphate = 5-(methylsulfanyl)-alpha-D-ribose 1-phosphate + adenine. The enzyme catalyses inosine + phosphate = alpha-D-ribose 1-phosphate + hypoxanthine. It carries out the reaction adenosine + H2O + H(+) = inosine + NH4(+). In terms of biological role, purine nucleoside enzyme that catalyzes the phosphorolysis of adenosine and inosine nucleosides, yielding D-ribose 1-phosphate and the respective free bases, adenine and hypoxanthine. Also catalyzes the phosphorolysis of S-methyl-5'-thioadenosine into adenine and S-methyl-5-thio-alpha-D-ribose 1-phosphate. Also has adenosine deaminase activity. In Staphylococcus saprophyticus subsp. saprophyticus (strain ATCC 15305 / DSM 20229 / NCIMB 8711 / NCTC 7292 / S-41), this protein is Purine nucleoside phosphorylase SSP1584.